The chain runs to 546 residues: Elongator complex protein 3 (546 aa).

Positions 81–371 (RTASGIAVVA…YRVQRDIPMP (291 aa)) constitute a Radical SAM core domain. [4Fe-4S] cluster-binding residues include Cys98, Cys108, and Cys111. Residues Lys163, 473 to 476 (ELHV), 496 to 498 (FGM), and Tyr529 contribute to the acetyl-CoA site. The 152-residue stretch at 395 to 546 (TQCRDVRTRE…EGPYMVKRLQ (152 aa)) folds into the N-acetyltransferase domain.

This sequence belongs to the ELP3 family. Component of the elongator complex. The cofactor is [4Fe-4S] cluster.

It localises to the cytoplasm. Its subcellular location is the nucleus. The enzyme catalyses uridine(34) in tRNA + acetyl-CoA + S-adenosyl-L-methionine + H2O = 5-(carboxymethyl)uridine(34) in tRNA + 5'-deoxyadenosine + L-methionine + CoA + 2 H(+). The protein operates within tRNA modification; 5-methoxycarbonylmethyl-2-thiouridine-tRNA biosynthesis. In terms of biological role, catalytic tRNA acetyltransferase subunit of the elongator complex which is required for multiple tRNA modifications, including mcm5U (5-methoxycarbonylmethyl uridine), mcm5s2U (5-methoxycarbonylmethyl-2-thiouridine), and ncm5U (5-carbamoylmethyl uridine). In the elongator complex, acts as a tRNA uridine(34) acetyltransferase by mediating formation of carboxymethyluridine in the wobble base at position 34 in tRNAs. This chain is Elongator complex protein 3, found in Gallus gallus (Chicken).